The chain runs to 331 residues: Holliday junction branch migration complex subunit RuvB (331 aa).

The segment at 1–186 (MAKTMMQDRL…FGIVQRLEFY (186 aa)) is large ATPase domain (RuvB-L). ATP contacts are provided by residues isoleucine 25, arginine 26, glycine 67, lysine 70, threonine 71, threonine 72, 133–135 (EDF), arginine 176, tyrosine 186, and arginine 223. Threonine 71 contacts Mg(2+). Residues 187 to 257 (NIADLTTIVS…IAGSALDMLA (71 aa)) form a small ATPAse domain (RuvB-S) region. The segment at 260–331 (RRGLDHLDRR…LTQMAIDQMV (72 aa)) is head domain (RuvB-H). The DNA site is built by arginine 296, arginine 315, and arginine 320.

This sequence belongs to the RuvB family. Homohexamer. Forms an RuvA(8)-RuvB(12)-Holliday junction (HJ) complex. HJ DNA is sandwiched between 2 RuvA tetramers; dsDNA enters through RuvA and exits via RuvB. An RuvB hexamer assembles on each DNA strand where it exits the tetramer. Each RuvB hexamer is contacted by two RuvA subunits (via domain III) on 2 adjacent RuvB subunits; this complex drives branch migration. In the full resolvosome a probable DNA-RuvA(4)-RuvB(12)-RuvC(2) complex forms which resolves the HJ.

It is found in the cytoplasm. It catalyses the reaction ATP + H2O = ADP + phosphate + H(+). Functionally, the RuvA-RuvB-RuvC complex processes Holliday junction (HJ) DNA during genetic recombination and DNA repair, while the RuvA-RuvB complex plays an important role in the rescue of blocked DNA replication forks via replication fork reversal (RFR). RuvA specifically binds to HJ cruciform DNA, conferring on it an open structure. The RuvB hexamer acts as an ATP-dependent pump, pulling dsDNA into and through the RuvAB complex. RuvB forms 2 homohexamers on either side of HJ DNA bound by 1 or 2 RuvA tetramers; 4 subunits per hexamer contact DNA at a time. Coordinated motions by a converter formed by DNA-disengaged RuvB subunits stimulates ATP hydrolysis and nucleotide exchange. Immobilization of the converter enables RuvB to convert the ATP-contained energy into a lever motion, pulling 2 nucleotides of DNA out of the RuvA tetramer per ATP hydrolyzed, thus driving DNA branch migration. The RuvB motors rotate together with the DNA substrate, which together with the progressing nucleotide cycle form the mechanistic basis for DNA recombination by continuous HJ branch migration. Branch migration allows RuvC to scan DNA until it finds its consensus sequence, where it cleaves and resolves cruciform DNA. The chain is Holliday junction branch migration complex subunit RuvB from Psychrobacter arcticus (strain DSM 17307 / VKM B-2377 / 273-4).